The primary structure comprises 561 residues: Microtubule-associated protein VP6 (561 aa).

As to quaternary structure, interacts with VP2.

The protein localises to the virion. It localises to the host cytoplasm. The protein resides in the host cytoskeleton. Functionally, minor inner capsid component. Displays NTPase and RNA 5'-triphosphatase (RTPase) activities. May function as a cofactor of polymerase VP2. Associates with microtubules and plays a role in the formation, structural organization and morphology of viral inclusions, where the assembly of cores and the replication of viral RNA occur. The chain is Microtubule-associated protein VP6 (S6) from Lymantria dispar cypovirus 1 (isolate Rao) (LdCPV-1).